Reading from the N-terminus, the 324-residue chain is Viral cathepsin (324 aa).

The signal sequence occupies residues 1–16 (MNKIMLCLLVCGVVHA). A propeptide spans 17 to 113 (ATYDLLKAPN…VILDRPPDRG (97 aa)) (activation peptide). Disulfide bonds link cysteine 134-cysteine 175, cysteine 168-cysteine 208, and cysteine 263-cysteine 311. Residue cysteine 137 is part of the active site. The N-linked (GlcNAc...) asparagine; by host glycan is linked to asparagine 159. Catalysis depends on residues histidine 270 and asparagine 290.

The protein belongs to the peptidase C1 family. In terms of processing, synthesized as an inactive proenzyme and activated by proteolytic removal of the inhibitory propeptide.

It catalyses the reaction Endopeptidase of broad specificity, hydrolyzing substrates of both cathepsin L and cathepsin B.. Its function is as follows. Cysteine protease that plays an essential role in host liquefaction to facilitate horizontal transmission of the virus. May participate in the degradation of foreign protein expressed by the baculovirus system. In Orgyia pseudotsugata (Douglas-fir tussock moth), this protein is Viral cathepsin (VCATH).